The primary structure comprises 176 residues: 3-hydroxydecanoyl-[acyl-carrier-protein] dehydratase (176 aa).

Histidine 71 is a catalytic residue.

Belongs to the thioester dehydratase family. FabA subfamily. As to quaternary structure, homodimer.

It is found in the cytoplasm. The enzyme catalyses a (3R)-hydroxyacyl-[ACP] = a (2E)-enoyl-[ACP] + H2O. It carries out the reaction (3R)-hydroxydecanoyl-[ACP] = (2E)-decenoyl-[ACP] + H2O. The catalysed reaction is (2E)-decenoyl-[ACP] = (3Z)-decenoyl-[ACP]. It functions in the pathway lipid metabolism; fatty acid biosynthesis. In terms of biological role, necessary for the introduction of cis unsaturation into fatty acids. Catalyzes the dehydration of (3R)-3-hydroxydecanoyl-ACP to E-(2)-decenoyl-ACP and then its isomerization to Z-(3)-decenoyl-ACP. Can catalyze the dehydratase reaction for beta-hydroxyacyl-ACPs with saturated chain lengths up to 16:0, being most active on intermediate chain length. The protein is 3-hydroxydecanoyl-[acyl-carrier-protein] dehydratase of Rhodopseudomonas palustris (strain BisB18).